A 587-amino-acid chain; its full sequence is Nucleoporin ndc-1 (587 aa).

Residues 1–79 (MMGENSSAYT…FHSEIDVRKK (79 aa)) are Cytoplasmic-facing. Positions 32 to 55 (ASTSATSSPNLRKSPNRGFSSPRA) are disordered. A helical transmembrane segment spans residues 80 to 100 (LASFVCGAAVALSFIVTVSIL). The Perinuclear space segment spans residues 101–121 (KLSIWAPFSSVQDSLTWWLYP). The chain crosses the membrane as a helical span at residues 122-142 (TSWPVTLFIWLSSVAWTFLII). Residues 143–161 (HQFCTVTQVPRIPITDTYA) lie on the Cytoplasmic side of the membrane. Residues 162–182 (WAGAALEFVHRLIFVYTAFTV) form a helical membrane-spanning segment. Residues 183–187 (SESSF) lie on the Perinuclear space side of the membrane. The helical transmembrane segment at 188-208 (FEDFAWIAIAFSVAISSALVI) threads the bilayer. The Cytoplasmic segment spans residues 209–255 (FRSDFHLNFSNVQVNSFKTLIDFAKSLPYGSLAETSGVDAAIAYTAA). Residues 256–276 (MALTVFGSPLLWGFSAWWLLI) form a helical membrane-spanning segment. The Perinuclear space portion of the chain corresponds to 277 to 281 (NIQFH). A helical membrane pass occupies residues 282–302 (LVLFGVCFAQQFFAKIFMKIV). The Cytoplasmic portion of the chain corresponds to 303–587 (NQIVMKPMKF…TIKLVCAEEI (285 aa)).

It belongs to the NDC1 family.

It is found in the nucleus. Its subcellular location is the nuclear pore complex. It localises to the nucleus membrane. Its function is as follows. Component of the nuclear pore complex (NPC), which plays a key role in de novo assembly and insertion of NPC in the nuclear envelope. In Caenorhabditis briggsae, this protein is Nucleoporin ndc-1 (npp-22).